The following is a 380-amino-acid chain: Cytochrome b (380 aa).

The next 4 helical transmembrane spans lie at 34–54, 78–99, 114–134, and 179–199; these read FGSLLGICLTTQILTGLLLAM, WLIRNIHANGASFFFICIYLHI, WNTGILLLLTLMATAFVGYVL, and FFALHFLLPFMIAGLTLIHLT. The heme b site is built by His-84 and His-98. Heme b contacts are provided by His-183 and His-197. His-202 serves as a coordination point for a ubiquinone. The next 4 membrane-spanning stretches (helical) occupy residues 227 to 247, 289 to 309, 321 to 341, and 348 to 368; these read LKDTLGFMLMLLPLTTLALFS, LGGVLALAASVLILFLSPLLH, LSQLLFWILIANLFILTWVGS, and FIIIGQLASLTYFTILLILLP.

This sequence belongs to the cytochrome b family. In terms of assembly, the cytochrome bc1 complex contains 11 subunits: 3 respiratory subunits (MT-CYB, CYC1 and UQCRFS1), 2 core proteins (UQCRC1 and UQCRC2) and 6 low-molecular weight proteins (UQCRH/QCR6, UQCRB/QCR7, UQCRQ/QCR8, UQCR10/QCR9, UQCR11/QCR10 and a cleavage product of UQCRFS1). This cytochrome bc1 complex then forms a dimer. Heme b serves as cofactor.

The protein resides in the mitochondrion inner membrane. Functionally, component of the ubiquinol-cytochrome c reductase complex (complex III or cytochrome b-c1 complex) that is part of the mitochondrial respiratory chain. The b-c1 complex mediates electron transfer from ubiquinol to cytochrome c. Contributes to the generation of a proton gradient across the mitochondrial membrane that is then used for ATP synthesis. This chain is Cytochrome b (MT-CYB), found in Fregetta tropica (Black-bellied storm-petrel).